A 476-amino-acid polypeptide reads, in one-letter code: Glutamate--tRNA ligase (476 aa).

A 'HIGH' region motif is present at residues 8-18 (PSPTGTLHIGT). Residues 247-251 (KLSKR) carry the 'KMSKS' region motif. Lys250 is an ATP binding site.

Belongs to the class-I aminoacyl-tRNA synthetase family. Glutamate--tRNA ligase type 1 subfamily. In terms of assembly, monomer.

Its subcellular location is the cytoplasm. The catalysed reaction is tRNA(Glu) + L-glutamate + ATP = L-glutamyl-tRNA(Glu) + AMP + diphosphate. Its function is as follows. Catalyzes the attachment of glutamate to tRNA(Glu) in a two-step reaction: glutamate is first activated by ATP to form Glu-AMP and then transferred to the acceptor end of tRNA(Glu). This Synechococcus sp. (strain WH7803) protein is Glutamate--tRNA ligase.